Reading from the N-terminus, the 117-residue chain is Holo-[acyl-carrier-protein] synthase (117 aa).

2 residues coordinate Mg(2+): Asp8 and Glu57.

Belongs to the P-Pant transferase superfamily. AcpS family. It depends on Mg(2+) as a cofactor.

The protein resides in the cytoplasm. The enzyme catalyses apo-[ACP] + CoA = holo-[ACP] + adenosine 3',5'-bisphosphate + H(+). Its function is as follows. Transfers the 4'-phosphopantetheine moiety from coenzyme A to a Ser of acyl-carrier-protein. This Limosilactobacillus reuteri (Lactobacillus reuteri) protein is Holo-[acyl-carrier-protein] synthase.